Consider the following 338-residue polypeptide: DNA-directed RNA polymerase subunit alpha (338 aa).

Residues 1 to 234 form an alpha N-terminal domain (alpha-NTD) region; it reads MIERNWNELI…DQLQIFITFE (234 aa). The interval 250–338 is alpha C-terminal domain (alpha-CTD); the sequence is FNPALLKKVD…DLAKKFEDQI (89 aa).

It belongs to the RNA polymerase alpha chain family. In terms of assembly, homodimer. The RNAP catalytic core consists of 2 alpha, 1 beta, 1 beta' and 1 omega subunit. When a sigma factor is associated with the core the holoenzyme is formed, which can initiate transcription.

The catalysed reaction is RNA(n) + a ribonucleoside 5'-triphosphate = RNA(n+1) + diphosphate. Its function is as follows. DNA-dependent RNA polymerase catalyzes the transcription of DNA into RNA using the four ribonucleoside triphosphates as substrates. The chain is DNA-directed RNA polymerase subunit alpha from Caulobacter sp. (strain K31).